The primary structure comprises 267 residues: MRVAALISGGKDSCYNMMRCIAEGHQIVALANLRPDDNQVESDELDSYMYQTVGHHAIDLYAEAMALPLYRRTIRGRSLETGRVYTRCEGDEVEDLYELLKLVKEKEEIEGVSVGAILSDYQRVRVENVCKRLNLQPLAYLWQRNQEDLLREMIASNIEAIIIKVAALGLDPDKHLGKTLGEMEPYLLELSKKYGVHVCGEGGEYETFTLDCPLFKKKIVVDTSEAVIHSADAFAPVAYLRLSGLHLEEKVSSVPGDDETTSYIHNS.

Residue Y97 is modified to Phosphotyrosine.

This sequence belongs to the Diphthine--ammonia ligase family.

It catalyses the reaction diphthine-[translation elongation factor 2] + NH4(+) + ATP = diphthamide-[translation elongation factor 2] + AMP + diphosphate + H(+). Its pathway is protein modification; peptidyl-diphthamide biosynthesis. Its function is as follows. Amidase that catalyzes the last step of diphthamide biosynthesis using ammonium and ATP. Diphthamide biosynthesis consists in the conversion of an L-histidine residue in the translation elongation factor eEF-2 (EEF2) to diphthamide. This Rattus norvegicus (Rat) protein is Diphthine--ammonia ligase (Dph6).